We begin with the raw amino-acid sequence, 113 residues long: Ranasmurfin (113 aa).

Position 2 is a 2',4',5'-topaquinone (Tyr-2). Positions 2 to 31 (YACSFPPSEIPGSKECLAEALQKHQGFKKK) form a cross-link, lysine tyrosylquinone (Tyr-Lys). Intrachain disulfides connect Cys-4–Cys-62, Cys-17–Cys-65, and Cys-37–Cys-101. The residue at position 9 (Ser-9) is an Aminomalonic acid (Ser); in chain B. A cross-link (S-cysteinyl 3-(oxidosulfanyl)alanine (Cys-Cys); in chain B) is located at residues 17 to 65 (CLAEALQKHQGFKKKSYALICAYLNYKEDAENYERAAEDFDSAVKCTGC). Residues 30–108 (KKSYALICAY…SLCTLFQKLY (79 aa)) constitute a cross-link (lysine tyrosylquinone (Lys-Tyr)). Cys-65 is subject to Cysteine sulfenic acid (-SOH); in chain B. The residue at position 108 (Tyr-108) is a 2',4',5'-topaquinone. Residues Tyr-108 and His-112 each contribute to the Zn(2+) site. A 5'-tyrosyl-5'-aminotyrosine (Tyr-Tyr) (interchain with Y-108) cross-link involves residue Tyr-108.

As to quaternary structure, homodimer. The two chains, designated A and B, differ in their modifications, but not, it is thought, in their sequence. The cofactor is Zn(2+). Foam nest.

Its subcellular location is the secreted. This is Ranasmurfin from Polypedates leucomystax (Common tree frog).